A 34-amino-acid chain; its full sequence is Photosystem I reaction center subunit XII (34 aa).

Residues 10 to 32 (VFVALVVAAHAAVLALRLSISLY) form a helical membrane-spanning segment.

This sequence belongs to the PsaM family.

The protein resides in the cellular thylakoid membrane. This chain is Photosystem I reaction center subunit XII, found in Parasynechococcus marenigrum (strain WH8102).